The sequence spans 185 residues: Phospholipase A2 inhibitor 25 kDa subunit (185 aa).

Cystine bridges form between Cys-3–Cys-27, Cys-6–Cys-13, Cys-20–Cys-48, Cys-54–Cys-75, Cys-76–Cys-81, Cys-101–Cys-126, Cys-119–Cys-146, and Cys-152–Cys-172.

Belongs to the CNF-like-inhibitor family. In terms of assembly, heterodimer with phospholipase A2 inhibitor 31 kDa. As to expression, expressed by the liver.

The protein resides in the secreted. In terms of biological role, inhibits the enzymatic activity of phospholipase A2. The chain is Phospholipase A2 inhibitor 25 kDa subunit from Naja kaouthia (Monocled cobra).